Reading from the N-terminus, the 395-residue chain is Mevalonate kinase (395 aa).

ATP contacts are provided by residues Lys-13, Asn-55, Asn-104, Ser-135, and 140-146; that span reads GAGLGSS. Residue Ser-146 is the Proton donor of the active site. Mg(2+)-binding residues include Ser-146 and Glu-193. Asp-204 functions as the Proton acceptor in the catalytic mechanism.

This sequence belongs to the GHMP kinase family. Mevalonate kinase subfamily. As to quaternary structure, homodimer. Requires Mg(2+) as cofactor.

The protein localises to the cytoplasm. It is found in the peroxisome. It catalyses the reaction (R)-mevalonate + ATP = (R)-5-phosphomevalonate + ADP + H(+). It functions in the pathway isoprenoid biosynthesis; isopentenyl diphosphate biosynthesis via mevalonate pathway; isopentenyl diphosphate from (R)-mevalonate: step 1/3. With respect to regulation, farnesyl pyrophosphate and geranyl pyrophosphate inhibit mevalonate kinase activity by binding competitively at the ATP-binding sites. Catalyzes the phosphorylation of mevalonate to mevalonate 5-phosphate, a key step in isoprenoid and cholesterol biosynthesis. In Mus musculus (Mouse), this protein is Mevalonate kinase.